The chain runs to 239 residues: tRNA (guanine-N(1)-)-methyltransferase (239 aa).

S-adenosyl-L-methionine contacts are provided by residues Gly108 and 127–132 (LGDFVL).

The protein belongs to the RNA methyltransferase TrmD family. Homodimer.

Its subcellular location is the cytoplasm. It carries out the reaction guanosine(37) in tRNA + S-adenosyl-L-methionine = N(1)-methylguanosine(37) in tRNA + S-adenosyl-L-homocysteine + H(+). Its function is as follows. Specifically methylates guanosine-37 in various tRNAs. This Streptococcus thermophilus (strain CNRZ 1066) protein is tRNA (guanine-N(1)-)-methyltransferase.